Reading from the N-terminus, the 506-residue chain is NADH-quinone oxidoreductase subunit N (506 aa).

Helical transmembrane passes span 14-34, 40-60, 72-92, 109-129, 131-151, 166-186, 209-229, 256-276, 286-306, 314-334, 343-363, 385-405, 420-440, and 465-485; these read MVPE…DLFF, YVAL…ITLY, FVLD…AALI, GEYY…ASSV, FVTL…LVGI, VING…LYGI, LLLA…IATV, MAGF…VSVQ, MSIY…VVAL, LFAY…VALS, FYML…HGLI, AIVM…AGFI, AHYV…VYYF, and IVMS…MIGY.

Belongs to the complex I subunit 2 family. In terms of assembly, NDH-1 is composed of 14 different subunits. Subunits NuoA, H, J, K, L, M, N constitute the membrane sector of the complex.

It localises to the cell membrane. It carries out the reaction a quinone + NADH + 5 H(+)(in) = a quinol + NAD(+) + 4 H(+)(out). Its function is as follows. NDH-1 shuttles electrons from NADH, via FMN and iron-sulfur (Fe-S) centers, to quinones in the respiratory chain. The immediate electron acceptor for the enzyme in this species is believed to be a menaquinone. Couples the redox reaction to proton translocation (for every two electrons transferred, four hydrogen ions are translocated across the cytoplasmic membrane), and thus conserves the redox energy in a proton gradient. This chain is NADH-quinone oxidoreductase subunit N, found in Bacillus anthracis.